The sequence spans 118 residues: Ribonuclease P protein component (118 aa).

Belongs to the RnpA family. Consists of a catalytic RNA component (M1 or rnpB) and a protein subunit.

The enzyme catalyses Endonucleolytic cleavage of RNA, removing 5'-extranucleotides from tRNA precursor.. RNaseP catalyzes the removal of the 5'-leader sequence from pre-tRNA to produce the mature 5'-terminus. It can also cleave other RNA substrates such as 4.5S RNA. The protein component plays an auxiliary but essential role in vivo by binding to the 5'-leader sequence and broadening the substrate specificity of the ribozyme. This is Ribonuclease P protein component from Shewanella putrefaciens (strain CN-32 / ATCC BAA-453).